The sequence spans 131 residues: ATP synthase epsilon chain, chloroplastic (131 aa).

This sequence belongs to the ATPase epsilon chain family. As to quaternary structure, F-type ATPases have 2 components, CF(1) - the catalytic core - and CF(0) - the membrane proton channel. CF(1) has five subunits: alpha(3), beta(3), gamma(1), delta(1), epsilon(1). CF(0) has three main subunits: a, b and c.

It localises to the plastid. It is found in the chloroplast thylakoid membrane. Produces ATP from ADP in the presence of a proton gradient across the membrane. The sequence is that of ATP synthase epsilon chain, chloroplastic from Oltmannsiellopsis viridis (Marine flagellate).